We begin with the raw amino-acid sequence, 247 residues long: 3,4-dihydroxy-2-butanone 4-phosphate synthase (247 aa).

D-ribulose 5-phosphate-binding positions include 38-39 (RE), aspartate 43, 179-183 (RMGQT), and glutamate 203. Glutamate 39 provides a ligand contact to Mg(2+).

The protein belongs to the DHBP synthase family. In terms of assembly, homodimer. The cofactor is Mg(2+). Mn(2+) is required as a cofactor.

The catalysed reaction is D-ribulose 5-phosphate = (2S)-2-hydroxy-3-oxobutyl phosphate + formate + H(+). Its pathway is cofactor biosynthesis; riboflavin biosynthesis; 2-hydroxy-3-oxobutyl phosphate from D-ribulose 5-phosphate: step 1/1. In terms of biological role, catalyzes the conversion of D-ribulose 5-phosphate to formate and 3,4-dihydroxy-2-butanone 4-phosphate. In Methanosarcina acetivorans (strain ATCC 35395 / DSM 2834 / JCM 12185 / C2A), this protein is 3,4-dihydroxy-2-butanone 4-phosphate synthase.